The chain runs to 427 residues: WD repeat and SOCS box-containing protein 1 (427 aa).

WD repeat units follow at residues 129–170 (SRSI…LLLN), 173–213 (DHTD…NMVK), 217–256 (GHPN…LIRK), 259–298 (GHHN…ILLE), and 314–353 (ANDR…PQAV). Positions 379 to 427 (SVHFWECPRSIASLQHLCRMALRRVKTTQQVEALPVPMPLRDFLTYRVV) constitute an SOCS box domain.

Component of a probable ECS E3 ubiquitin-protein ligase complex that contains the Elongin BC complex.

The protein operates within protein modification; protein ubiquitination. Functionally, probable substrate-recognition component of a SCF-like ECS (Elongin-Cullin-SOCS-box protein) E3 ubiquitin-protein ligase complex which mediates the ubiquitination and subsequent proteasomal degradation of target proteins. This is WD repeat and SOCS box-containing protein 1 (wsb1) from Takifugu rubripes (Japanese pufferfish).